The primary structure comprises 379 residues: Chaperone protein DnaJ (379 aa).

The J domain maps to 5-70 (DYYEILGLDK…QKKAQYDQFG (66 aa)). The CR-type zinc finger occupies 135–217 (GVEKEISVTR…CRGKGIVRKH (83 aa)). The Zn(2+) site is built by Cys148, Cys151, Cys165, Cys168, Cys191, Cys194, Cys205, and Cys208. CXXCXGXG motif repeat units follow at residues 148-155 (CETCNGTG), 165-172 (CDKCNGTG), 191-198 (CDKCGGRG), and 205-212 (CEECRGKG).

It belongs to the DnaJ family. As to quaternary structure, homodimer. Requires Zn(2+) as cofactor.

Its subcellular location is the cytoplasm. Functionally, participates actively in the response to hyperosmotic and heat shock by preventing the aggregation of stress-denatured proteins and by disaggregating proteins, also in an autonomous, DnaK-independent fashion. Unfolded proteins bind initially to DnaJ; upon interaction with the DnaJ-bound protein, DnaK hydrolyzes its bound ATP, resulting in the formation of a stable complex. GrpE releases ADP from DnaK; ATP binding to DnaK triggers the release of the substrate protein, thus completing the reaction cycle. Several rounds of ATP-dependent interactions between DnaJ, DnaK and GrpE are required for fully efficient folding. Also involved, together with DnaK and GrpE, in the DNA replication of plasmids through activation of initiation proteins. The sequence is that of Chaperone protein DnaJ from Clostridium kluyveri (strain ATCC 8527 / DSM 555 / NBRC 12016 / NCIMB 10680 / K1).